A 508-amino-acid polypeptide reads, in one-letter code: Lysine--tRNA ligase (508 aa).

Glu-418 and Glu-425 together coordinate Mg(2+).

Belongs to the class-II aminoacyl-tRNA synthetase family. In terms of assembly, homodimer. Mg(2+) is required as a cofactor.

Its subcellular location is the cytoplasm. The catalysed reaction is tRNA(Lys) + L-lysine + ATP = L-lysyl-tRNA(Lys) + AMP + diphosphate. The polypeptide is Lysine--tRNA ligase (Burkholderia multivorans (strain ATCC 17616 / 249)).